We begin with the raw amino-acid sequence, 671 residues long: MPDPSTYRPAPGSIPVEPGVYRFRDPHGRVIYVGKAKSLRSRLTSYFADITGLHPRTRQMVTTAGSVEWTVVGTEVEALQLEYNWIKEFDPRFNVRYRDDKSYPVLAVTLNEEYPRLFVYRGPRRKGVRYFGPYSHAWAIRETLDLLTRVFPARTCSNGVFKRHKQIDRPCLLGYIEKCSAPCIGRVSAQEHREIVLDFCDFLSGKTDRLARDMEREMNQAAQELNFERAARLRDNISALQRALERQTVVFGDGTDADVVAFSDDELEAAVQVFHVRGGRVRGQRGWIVEKTGDPGDSDLQGLVEQFLTQFYGDQADLVYAADTEADVAPVPREVLVPVLPRDAEGMTSWLTGLRGSRVSLRVPQRGDKKALAETVERNAKEALAQHKLKRAGDLTTRSAALQELQDALGLEQAPLRIECIDISHVQGTDVVASLVVFEDGLSRRSDYRHYSIREAAGDGRSDDVASIAEVTRRRFARHVQDQQAVTEYAAEGHSRKFAYPPNLFVVDGGAPQVNAAAAELSELGVTDVAVIGLAKRLEEVWVPGEPDPVILPRTSEALYLLQRVRDEAHRFAITFHRSKRSRRMTASVLDGIPGLGEARRAALVSHFGSVAQLKKASVEEITAVPGIGAATAVAVREALIETDSSAPSSGATEAVLPAMVENGVDDTPST.

The 80-residue stretch at 16–95 (VEPGVYRFRD…IKEFDPRFNV (80 aa)) folds into the GIY-YIG domain. The UVR domain maps to 208–243 (DRLARDMEREMNQAAQELNFERAARLRDNISALQRA). The segment at 645–671 (SSAPSSGATEAVLPAMVENGVDDTPST) is disordered.

The protein belongs to the UvrC family. Interacts with UvrB in an incision complex.

It is found in the cytoplasm. In terms of biological role, the UvrABC repair system catalyzes the recognition and processing of DNA lesions. UvrC both incises the 5' and 3' sides of the lesion. The N-terminal half is responsible for the 3' incision and the C-terminal half is responsible for the 5' incision. This Mycobacteroides abscessus (strain ATCC 19977 / DSM 44196 / CCUG 20993 / CIP 104536 / JCM 13569 / NCTC 13031 / TMC 1543 / L948) (Mycobacterium abscessus) protein is UvrABC system protein C.